Here is a 448-residue protein sequence, read N- to C-terminus: Exodeoxyribonuclease 7 large subunit (448 aa).

This sequence belongs to the XseA family. Heterooligomer composed of large and small subunits.

The protein resides in the cytoplasm. The catalysed reaction is Exonucleolytic cleavage in either 5'- to 3'- or 3'- to 5'-direction to yield nucleoside 5'-phosphates.. Bidirectionally degrades single-stranded DNA into large acid-insoluble oligonucleotides, which are then degraded further into small acid-soluble oligonucleotides. The protein is Exodeoxyribonuclease 7 large subunit of Nitrosomonas eutropha (strain DSM 101675 / C91 / Nm57).